The following is a 666-amino-acid chain: Probable potassium transport system protein Kup (666 aa).

12 consecutive transmembrane segments (helical) span residues 16 to 36, 58 to 78, 100 to 120, 149 to 169, 173 to 193, 221 to 241, 253 to 273, 294 to 314, 343 to 363, 373 to 393, 399 to 419, and 424 to 444; these read GFII…LYTM, ISLI…LIAL, PWLI…GALT, IITT…GTGF, IFGP…FFNM, IFIL…YSDL, WPFV…WILA, VYLV…LISG, LYIP…VLAF, YGLA…YYLI, PILA…FFLA, and FMHG…VMFI.

Belongs to the HAK/KUP transporter (TC 2.A.72) family.

Its subcellular location is the cell membrane. The enzyme catalyses K(+)(in) + H(+)(in) = K(+)(out) + H(+)(out). Functionally, transport of potassium into the cell. Likely operates as a K(+):H(+) symporter. This chain is Probable potassium transport system protein Kup, found in Streptococcus pyogenes serotype M3 (strain ATCC BAA-595 / MGAS315).